The sequence spans 480 residues: Argininosuccinate lyase (480 aa).

This sequence belongs to the lyase 1 family. Argininosuccinate lyase subfamily.

Its subcellular location is the cytoplasm. It catalyses the reaction 2-(N(omega)-L-arginino)succinate = fumarate + L-arginine. It functions in the pathway amino-acid biosynthesis; L-arginine biosynthesis; L-arginine from L-ornithine and carbamoyl phosphate: step 3/3. In Ruthia magnifica subsp. Calyptogena magnifica, this protein is Argininosuccinate lyase.